A 179-amino-acid chain; its full sequence is Large ribosomal subunit protein uL6 (179 aa).

Belongs to the universal ribosomal protein uL6 family. Part of the 50S ribosomal subunit.

Its function is as follows. This protein binds to the 23S rRNA, and is important in its secondary structure. It is located near the subunit interface in the base of the L7/L12 stalk, and near the tRNA binding site of the peptidyltransferase center. The sequence is that of Large ribosomal subunit protein uL6 from Geobacter sulfurreducens (strain ATCC 51573 / DSM 12127 / PCA).